Reading from the N-terminus, the 382-residue chain is DnaJ homolog dnj-20 (382 aa).

The N-terminal stretch at 1–21 (MRILNVSLLVLTAFLVDFVEC) is a signal peptide. The J domain occupies 24 to 89 (DFYKILGVSK…EKRAMYDRHG (66 aa)).

This chain is DnaJ homolog dnj-20, found in Caenorhabditis briggsae.